Consider the following 215-residue polypeptide: 3-demethoxyubiquinol 3-hydroxylase (215 aa).

A disordered region spans residues proline 26 to glutamate 47. Residues glutamate 64, glutamate 94, histidine 97, glutamate 146, glutamate 178, and histidine 181 each contribute to the Fe cation site.

The protein belongs to the COQ7 family. Fe cation is required as a cofactor.

Its subcellular location is the cell membrane. It catalyses the reaction a 5-methoxy-2-methyl-3-(all-trans-polyprenyl)benzene-1,4-diol + AH2 + O2 = a 3-demethylubiquinol + A + H2O. It participates in cofactor biosynthesis; ubiquinone biosynthesis. Catalyzes the hydroxylation of 2-nonaprenyl-3-methyl-6-methoxy-1,4-benzoquinol during ubiquinone biosynthesis. In Pseudomonas syringae pv. syringae (strain B728a), this protein is 3-demethoxyubiquinol 3-hydroxylase.